We begin with the raw amino-acid sequence, 1155 residues long: DNA-directed RNA polymerase subunit beta (1155 aa).

Belongs to the RNA polymerase beta chain family. In terms of assembly, the RNAP catalytic core consists of 2 alpha, 1 beta, 1 beta' and 1 omega subunit. When a sigma factor is associated with the core the holoenzyme is formed, which can initiate transcription.

The catalysed reaction is RNA(n) + a ribonucleoside 5'-triphosphate = RNA(n+1) + diphosphate. DNA-dependent RNA polymerase catalyzes the transcription of DNA into RNA using the four ribonucleoside triphosphates as substrates. This is DNA-directed RNA polymerase subunit beta from Borrelia hermsii (strain HS1 / DAH).